We begin with the raw amino-acid sequence, 409 residues long: Microfibrillar-associated protein 3-like (409 aa).

The first 28 residues, 1–28 (MGLLKSHLTVCLPPSVPFLILVSTLATA), serve as a signal peptide directing secretion. Over 29–148 (KSVTNSTLNG…TLRVIFTSGD (120 aa)) the chain is Extracellular. 5 N-linked (GlcNAc...) asparagine glycosylation sites follow: Asn33, Asn37, Asn67, Asn111, and Asn135. The Ig-like C2-type domain maps to 47–141 (PVIIARTDHI…GTINNTVTLR (95 aa)). Cysteines 68 and 125 form a disulfide. The helical transmembrane segment at 149-169 (MGVYYMVVCLVAFTIVMILNI) threads the bilayer. At 170 to 409 (TRLCMMSSHL…NTCIIYESHV (240 aa)) the chain is on the cytoplasmic side. Position 287 is a phosphotyrosine (Tyr287). Phosphoserine occurs at positions 298, 303, 306, and 307. Residues 319 to 392 (VSVHPQSKKD…LPPAHLETTE (74 aa)) form a disordered region. Positions 333–348 (QEGENLEVKDEEETEP) are enriched in acidic residues. Over residues 362-372 (DITTTELTSEE) the composition is skewed to polar residues.

It is found in the cell membrane. It localises to the nucleus. The protein resides in the cytoplasm. In terms of biological role, may participate in the nuclear signaling of EGFR and MAPK1/ERK2. In Rattus norvegicus (Rat), this protein is Microfibrillar-associated protein 3-like (Mfap3l).